A 930-amino-acid polypeptide reads, in one-letter code: Protein translocase subunit SecA (930 aa).

Residues glutamine 83, 101–105 (GEGKT), and aspartate 491 each bind ATP.

Belongs to the SecA family. Monomer and homodimer. Part of the essential Sec protein translocation apparatus which comprises SecA, SecYEG and auxiliary proteins SecDF. Other proteins may also be involved.

The protein localises to the cell inner membrane. It localises to the cellular thylakoid membrane. It is found in the cytoplasm. It carries out the reaction ATP + H2O + cellular proteinSide 1 = ADP + phosphate + cellular proteinSide 2.. Part of the Sec protein translocase complex. Interacts with the SecYEG preprotein conducting channel. Has a central role in coupling the hydrolysis of ATP to the transfer of proteins into and across the cell membrane, serving as an ATP-driven molecular motor driving the stepwise translocation of polypeptide chains across the membrane. Functionally, probably participates in protein translocation into and across both the cytoplasmic and thylakoid membranes in cyanobacterial cells. The sequence is that of Protein translocase subunit SecA from Trichormus variabilis (strain ATCC 29413 / PCC 7937) (Anabaena variabilis).